The chain runs to 85 residues: Large ribosomal subunit protein bL27 (85 aa).

The span at 1–10 (MAQKKGGGST) shows a compositional bias: gly residues. A disordered region spans residues 1–20 (MAQKKGGGSTRNGRDSQPKM).

The protein belongs to the bacterial ribosomal protein bL27 family.

This is Large ribosomal subunit protein bL27 from Methylibium petroleiphilum (strain ATCC BAA-1232 / LMG 22953 / PM1).